A 761-amino-acid polypeptide reads, in one-letter code: Protein PHTF1 (761 aa).

In terms of domain architecture, PHTF spans arginine 6 to isoleucine 150. 3 helical membrane-spanning segments follow: residues glycine 77–leucine 97, isoleucine 99–leucine 119, and proline 121–valine 141. Residues arginine 152–lysine 184 are disordered. Low complexity predominate over residues asparagine 170–serine 181. N-linked (GlcNAc...) asparagine glycosylation is found at asparagine 179 and asparagine 224. Serine 272, serine 276, serine 277, serine 333, and serine 335 each carry phosphoserine. The interval valine 345–aspartate 414 is disordered. Residues serine 347–leucine 363 are compositionally biased toward low complexity. The N-linked (GlcNAc...) asparagine glycan is linked to asparagine 362. Residues serine 364 to serine 375 are compositionally biased toward basic and acidic residues. A glycan (N-linked (GlcNAc...) asparagine) is linked at asparagine 430. The next 4 helical transmembrane spans lie at glycine 472–leucine 492, threonine 514–isoleucine 534, valine 610–valine 630, and tryptophan 644–glycine 664. Residues asparagine 673 and asparagine 732 are each glycosylated (N-linked (GlcNAc...) asparagine). The helical transmembrane segment at valine 736–leucine 756 threads the bilayer.

In terms of assembly, interacts with FEM1B. As to expression, widely expressed with highest levels in testis.

It localises to the endoplasmic reticulum membrane. Its subcellular location is the golgi apparatus. The protein localises to the cis-Golgi network membrane. This Mus musculus (Mouse) protein is Protein PHTF1.